Reading from the N-terminus, the 440-residue chain is Phosphatidylcholine-sterol acyltransferase (440 aa).

A signal peptide spans 1 to 24; it reads MGPPGSPWQWVTLLLGLLLPPAAP. A glycan (N-linked (GlcNAc...) (complex) asparagine) is linked at Asn-44. Cys-74 and Cys-98 are oxidised to a cystine. An N-linked (GlcNAc...) (complex) asparagine glycan is attached at Asn-108. Ser-205 serves as the catalytic Nucleophile. N-linked (GlcNAc...) (complex) asparagine glycosylation is present at Asn-296. A disulfide bond links Cys-337 and Cys-380. Active-site charge relay system residues include Asp-369 and His-401. Asn-408 carries an N-linked (GlcNAc...) (complex) asparagine glycan. Thr-431 is a glycosylation site (O-linked (GalNAc...) threonine). An O-linked (GalNAc...) serine glycan is attached at Ser-433.

The protein belongs to the AB hydrolase superfamily. Lipase family. O- and N-glycosylated. O-glycosylation on Thr-431 and Ser-433 consists of sialylated galactose beta 1--&gt;3N-acetylgalactosamine structures. N-glycosylated sites contain sialylated triantennary and/or biantennary complex structures. Detected in blood plasma. Detected in cerebral spinal fluid (at protein level). Detected in liver. Expressed mainly in brain, liver and testes.

It localises to the secreted. It carries out the reaction a sterol + a 1,2-diacyl-sn-glycero-3-phosphocholine = a sterol ester + a 1-acyl-sn-glycero-3-phosphocholine. The catalysed reaction is a 1-O-alkyl-2-acetyl-sn-glycero-3-phosphocholine + H2O = a 1-O-alkyl-sn-glycero-3-phosphocholine + acetate + H(+). It catalyses the reaction a 1-hexadecanoyl-2-acyl-sn-glycero-3-phosphocholine + (24S)-hydroxycholesterol = (24S)-24-hydroxycholesterol ester + 1-hexadecanoyl-sn-glycero-3-phosphocholine. The enzyme catalyses (24S)-hydroxycholesterol + 1-hexadecanoyl-2-(9Z,12Z-octadecadienoyl)-sn-glycero-3-phosphocholine = (24S)-hydroxycholesterol 3-linoleoate + 1-hexadecanoyl-sn-glycero-3-phosphocholine. It carries out the reaction 1-hexadecanoyl-2-(5Z,8Z,11Z,14Z-eicosatetraenoyl)-sn-glycero-3-phosphocholine + cholesterol = cholesteryl (5Z,8Z,11Z,14Z)-eicosatetraenoate + 1-hexadecanoyl-sn-glycero-3-phosphocholine. The catalysed reaction is 1-hexadecanoyl-2-(9Z-octadecenoyl)-sn-glycero-3-phosphocholine + cholesterol = cholesteryl (9Z-octadecenoate) + 1-hexadecanoyl-sn-glycero-3-phosphocholine. It catalyses the reaction 1-hexadecanoyl-2-(8Z,11Z,14Z-eicosatrienoyl)-sn-glycero-3-phosphocholine + cholesterol = cholesteryl (8Z,11Z,14Z)-eicosatrienoate + 1-hexadecanoyl-sn-glycero-3-phosphocholine. The enzyme catalyses 1-hexadecanoyl-2-(5Z,8Z,11Z-eicosatrienoyl)-sn-glycero-3-phosphocholine + cholesterol = cholesteryl (5Z,8Z,11Z)-eicosatrienoate + 1-hexadecanoyl-sn-glycero-3-phosphocholine. It carries out the reaction 1-hexadecanoyl-2-(5Z,8Z,11Z,14Z,17Z-eicosapentaenoyl)-sn-glycero-3-phosphocholine + cholesterol = (5Z,8Z,11Z,14Z,17Z-eicosapentaenoyl)-cholesterol + 1-hexadecanoyl-sn-glycero-3-phosphocholine. The catalysed reaction is 1-hexadecanoyl-2-(9Z,12Z-octadecadienoyl)-sn-glycero-3-phosphocholine + cholesterol = cholesteryl (9Z,12Z)-octadecadienoate + 1-hexadecanoyl-sn-glycero-3-phosphocholine. It catalyses the reaction 1-hexadecanoyl-2-(6Z,9Z,12Z-octadecatrienoyl)-sn-glycero-3-phosphocholine + cholesterol = (6Z,9Z,12Z-octadecatrienoyl)-cholesterol + 1-hexadecanoyl-sn-glycero-3-phosphocholine. The enzyme catalyses 1-hexadecanoyl-2-(11Z,14Z,17Z-eicosatrienoyl)-sn-glycero-3-phosphocholine + cholesterol = (11Z,14Z,17Z-eicosatrienoyl)-cholesterol + 1-hexadecanoyl-sn-glycero-3-phosphocholine. It carries out the reaction 1-hexadecanoyl-2-(9Z,12Z,15Z-octadecatrienoyl)-sn-glycero-3-phosphocholine + cholesterol = (9Z,12Z,15Z-octadecatrienoyl)-cholesterol + 1-hexadecanoyl-sn-glycero-3-phosphocholine. The catalysed reaction is 1-hexadecanoyl-2-(9Z,12Z-octadecadienoyl)-sn-glycero-3-phosphocholine + H2O = (9Z,12Z)-octadecadienoate + 1-hexadecanoyl-sn-glycero-3-phosphocholine + H(+). It catalyses the reaction 1-hexadecanoyl-2-(5Z,8Z,11Z,14Z-eicosatetraenoyl)-sn-glycero-3-phosphocholine + H2O = 1-hexadecanoyl-sn-glycero-3-phosphocholine + (5Z,8Z,11Z,14Z)-eicosatetraenoate + H(+). The enzyme catalyses a 1-O-alkyl-2-acetyl-sn-glycero-3-phosphocholine + 1-hexadecanoyl-sn-glycero-3-phosphocholine = 1-hexadecanoyl-2-acetyl-sn-glycero-3-phosphocholine + a 1-O-alkyl-sn-glycero-3-phosphocholine. With respect to regulation, APOA1 is the most potent activator in plasma. Also activated by APOE, APOC1 and APOA4. Inhibited by haptoglobin and 5,5'-dithiobis-(2-nitrobenzoic acid) (DTNB). Its function is as follows. Central enzyme in the extracellular metabolism of plasma lipoproteins. Synthesized mainly in the liver and secreted into plasma where it converts cholesterol and phosphatidylcholines (lecithins) to cholesteryl esters and lysophosphatidylcholines on the surface of high and low density lipoproteins (HDLs and LDLs). The cholesterol ester is then transported back to the liver. Has a preference for plasma 16:0-18:2 or 18:O-18:2 phosphatidylcholines. Also produced in the brain by primary astrocytes, and esterifies free cholesterol on nascent APOE-containing lipoproteins secreted from glia and influences cerebral spinal fluid (CSF) APOE- and APOA1 levels. Together with APOE and the cholesterol transporter ABCA1, plays a key role in the maturation of glial-derived, nascent lipoproteins. Required for remodeling high-density lipoprotein particles into their spherical forms. Catalyzes the hydrolysis of 1-O-alkyl-2-acetyl-sn-glycero-3-phosphocholine (platelet-activating factor or PAF) to 1-O-alkyl-sn-glycero-3-phosphocholine (lyso-PAF). Also catalyzes the transfer of the acetate group from PAF to 1-hexadecanoyl-sn-glycero-3-phosphocholine forming lyso-PAF. Catalyzes the esterification of (24S)-hydroxycholesterol (24(S)OH-C), also known as cerebrosterol to produce 24(S)OH-C monoesters. The polypeptide is Phosphatidylcholine-sterol acyltransferase (LCAT) (Homo sapiens (Human)).